The following is a 651-amino-acid chain: Probable potassium transport system protein Kup (651 aa).

The next 12 helical transmembrane spans lie at 41-61 (LVLG…IYAF), 82-102 (VVSL…VLFV), 130-150 (LILG…VITP), 163-183 (IVAP…LVTL), 194-214 (VAIV…ASGL), 235-255 (FLMI…LAMT), 276-296 (WLWI…AFIL), 309-329 (MMPS…TVIA), 366-386 (IYIP…VLGF), 395-415 (AYGI…YIVM), 426-446 (ALPI…ANII), and 450-470 (EGGW…WTWV).

It belongs to the HAK/KUP transporter (TC 2.A.72) family.

The protein resides in the cell inner membrane. The enzyme catalyses K(+)(in) + H(+)(in) = K(+)(out) + H(+)(out). Transport of potassium into the cell. Likely operates as a K(+):H(+) symporter. The chain is Probable potassium transport system protein Kup from Brucella anthropi (strain ATCC 49188 / DSM 6882 / CCUG 24695 / JCM 21032 / LMG 3331 / NBRC 15819 / NCTC 12168 / Alc 37) (Ochrobactrum anthropi).